A 336-amino-acid polypeptide reads, in one-letter code: Probable G-protein coupled receptor 160 (336 aa).

Residues 1-21 lie on the Extracellular side of the membrane; sequence MTALPSKNCSFQYQSHQAPRS. An N-linked (GlcNAc...) asparagine glycan is attached at N8. Residues 22–42 form a helical membrane-spanning segment; sequence LDATCLLLLIILGKVLLNVLI. The Cytoplasmic portion of the chain corresponds to 43-56; sequence LRVKRKDTSWSFME. A helical transmembrane segment spans residues 57-77; the sequence is YFCFSLALVDLLLLVNISVLT. Residues 78 to 95 are Extracellular-facing; the sequence is YFRDFVVLGIRFTNYHIC. The helical transmembrane segment at 96 to 116 threads the bilayer; it reads LLTQIVSFAYGFLHYPVCSLA. Over 117–136 the chain is Cytoplasmic; the sequence is CIDYWCNLSRATKPSSRWQK. A helical transmembrane segment spans residues 137–157; it reads LLYLLTVILTWISVLAYVLGD. Topologically, residues 158-187 are extracellular; it reads PAISASLKTHKTSVNQCPSYVSTQSHWLSL. Residues 188–208 form a helical membrane-spanning segment; the sequence is SMLMILSVAFLISWQEVVALI. The Cytoplasmic portion of the chain corresponds to 209–243; that stretch reads QAIRIASYKNKAVLYFPFPPHTSYTVSPRAVLLPR. The helical transmembrane segment at 244–264 threads the bilayer; it reads LIVCFLGTWFPFVALQVLILS. Residues 265–272 lie on the Extracellular side of the membrane; that stretch reads LRVQIPAY. The chain crosses the membrane as a helical span at residues 273 to 293; sequence IEMNVPWLYFVNSFLIAAVYW. Over 294-336 the chain is Cytoplasmic; that stretch reads FNCHKLYWRDGMFPVDPFINWKCCFVPVHRLKQVERPMSIIIC.

This sequence belongs to the G-protein coupled receptor 1 family.

It localises to the cell membrane. In terms of biological role, orphan receptor. The polypeptide is Probable G-protein coupled receptor 160 (Gpr160) (Rattus norvegicus (Rat)).